Consider the following 466-residue polypeptide: GATA-binding factor 2 (466 aa).

2 stretches are compositionally biased toward low complexity: residues 139–155 (GSST…TPAS) and 174–188 (PDPN…SSSA). A disordered region spans residues 139–196 (GSSTSSTASVSSLTPASHSGSHLFGFPPTPPKEVSPDPNSTSAASPSSSAGARQEDKD). GATA-type zinc fingers lie at residues 281 to 305 (CVNC…CNAC) and 335 to 359 (CANC…CNAC). The interval 436 to 466 (GHILPTPTPIHPSSSISFGHPHPSSMVTAMG) is disordered.

Expressed in all developmental stages of erythroid cells but is additionally found in a limited subset of other tissues.

The protein resides in the nucleus. Functionally, transcriptional activator which probably serves as a general switch factor for cell-specific development. It binds to DNA sites with the consensus sequence 5'-[AT]GATA[AG]-3' within regulatory regions of genes. This Gallus gallus (Chicken) protein is GATA-binding factor 2 (GATA2).